The following is a 154-amino-acid chain: Myoglobin (154 aa).

Positions 2 to 148 constitute a Globin domain; the sequence is GLSDGEWQLV…FRNDIAAKYK (147 aa). A Phosphoserine modification is found at S4. Residue H65 coordinates nitrite. Position 65 (H65) interacts with O2. A Phosphothreonine modification is found at T68. H94 contacts heme b.

Belongs to the globin family. As to quaternary structure, monomeric.

Its subcellular location is the cytoplasm. The protein localises to the sarcoplasm. It carries out the reaction Fe(III)-heme b-[protein] + nitric oxide + H2O = Fe(II)-heme b-[protein] + nitrite + 2 H(+). The catalysed reaction is H2O2 + AH2 = A + 2 H2O. Its function is as follows. Monomeric heme protein which primary function is to store oxygen and facilitate its diffusion within muscle tissues. Reversibly binds oxygen through a pentacoordinated heme iron and enables its timely and efficient release as needed during periods of heightened demand. Depending on the oxidative conditions of tissues and cells, and in addition to its ability to bind oxygen, it also has a nitrite reductase activity whereby it regulates the production of bioactive nitric oxide. Under stress conditions, like hypoxia and anoxia, it also protects cells against reactive oxygen species thanks to its pseudoperoxidase activity. The sequence is that of Myoglobin (MB) from Ondatra zibethicus (Muskrat).